Here is a 107-residue protein sequence, read N- to C-terminus: NADH-quinone oxidoreductase subunit K (107 aa).

3 helical membrane-spanning segments follow: residues 11–31, 36–56, and 67–87; these read LTHYLVLAALLFVMGMAGVLL, IVLLMSIELMLNSVNLTFVAF, and IMVFFVMTIAAAEAAVGLALA.

This sequence belongs to the complex I subunit 4L family. In terms of assembly, NDH-1 is composed of 14 different subunits. Subunits NuoA, H, J, K, L, M, N constitute the membrane sector of the complex.

Its subcellular location is the cell inner membrane. It catalyses the reaction a quinone + NADH + 5 H(+)(in) = a quinol + NAD(+) + 4 H(+)(out). Functionally, NDH-1 shuttles electrons from NADH, via FMN and iron-sulfur (Fe-S) centers, to quinones in the respiratory chain. The immediate electron acceptor for the enzyme in this species is believed to be ubiquinone. Couples the redox reaction to proton translocation (for every two electrons transferred, four hydrogen ions are translocated across the cytoplasmic membrane), and thus conserves the redox energy in a proton gradient. The chain is NADH-quinone oxidoreductase subunit K from Bdellovibrio bacteriovorus (strain ATCC 15356 / DSM 50701 / NCIMB 9529 / HD100).